A 549-amino-acid chain; its full sequence is 65-kDa microtubule-associated protein 9 (549 aa).

3 coiled-coil regions span residues 36–123, 160–199, and 459–492; these read IEIE…ERKI, SLRK…CSVL, and GNRL…HQGQ. The interval 474 to 549 is disordered; it reads EEKEQERRRK…SFSTPLSRHG (76 aa). Positions 481-490 are enriched in basic residues; it reads RRKRDLKKHQ. S501 and S546 each carry phosphoserine. A compositionally biased stretch (polar residues) spans 514–549; that stretch reads VSTNKRFVSSPHTPQTDSPHSAKSNQSFSTPLSRHG.

The protein belongs to the MAP65/ASE1 family. As to quaternary structure, forms dimer. Binds to microtubules (MT).

Its subcellular location is the nucleus. It is found in the cytoplasm. The protein localises to the cytoskeleton. It localises to the spindle pole. In Arabidopsis thaliana (Mouse-ear cress), this protein is 65-kDa microtubule-associated protein 9 (MAP65-9).